Consider the following 317-residue polypeptide: Probable F-box protein At2g36090 (317 aa).

One can recognise an F-box domain in the interval 25 to 74 (IESHILTRLDGATLASVSCASSHLHHLASNEILWSKICRSTWPSCSGGSR).

The protein is Probable F-box protein At2g36090 of Arabidopsis thaliana (Mouse-ear cress).